Consider the following 487-residue polypeptide: Cyclic AMP-dependent transcription factor ATF-2 (487 aa).

The C2H2-type zinc finger occupies 7–31 (FLCTAPGCGQRFTNEDHLAVHKHKH). Thr34 bears the Phosphothreonine; by PKC/PRKCH mark. Ser44 bears the Phosphoserine; by VRK1 mark. A phosphothreonine mark is found at Thr51 and Thr53. Thr55 is subject to Phosphothreonine; by VRK1. A phosphoserine mark is found at Ser72 and Ser94. Phosphothreonine is present on Thr98. Position 103 is a phosphoserine; by PKC/PRKCA and PKC/PRKCB (Ser103). Disordered stretches follow at residues 107 to 130 (EPSV…TNDE) and 241 to 355 (PGIP…RQKR). Position 118 is a phosphoserine (Ser118). A compositionally biased stretch (polar residues) spans 264-275 (LTQQHPPVTNGD). An essential for its histone acetyltransferase activity region spans residues 278-281 (KGHG). Low complexity predominate over residues 300–316 (PATSTTETPASPAHTTP). Ser310 carries the post-translational modification Phosphoserine. A Phosphoserine; by PKC/PRKCA and PKC/PRKCB modification is found at Ser322. Over residues 328 to 345 (AANEDPDEKRRKFLERNR) the composition is skewed to basic and acidic residues. In terms of domain architecture, bZIP spans 334–397 (DEKRRKFLER…AQLKQLLLAH (64 aa)). Positions 336–356 (KRRKFLERNRAAASRCRQKRK) are basic motif. At Lys339 the chain carries N6-acetyllysine. Residue Ser349 is modified to Phosphoserine; by PKC/PRKCA and PKC/PRKCB. An N6-acetyllysine modification is found at Lys356. Residues 362–390 (LEKKAEDLSSLNGQLQSEVTLLRNEVAQL) are leucine-zipper. Positions 387 to 396 (VAQLKQLLLA) match the Nuclear export signal motif. Residues 407–487 (KKSGYHTADK…PSSQAQPSGS (81 aa)) form a disordered region. Residues Ser424 and Ser428 each carry the phosphoserine modification. The span at 425–436 (VPSSPHTEAIQH) shows a compositional bias: polar residues. The segment covering 437–449 (SSVSTSNGVSSTS) has biased composition (low complexity). The span at 457–470 (SVLTQMADQSTEPA) shows a compositional bias: polar residues. 2 positions are modified to phosphoserine; by ATM: Ser472 and Ser480. Over residues 478–487 (PSSQAQPSGS) the composition is skewed to polar residues.

It belongs to the bZIP family. ATF subfamily. In terms of assembly, binds DNA as a dimer and can form a homodimer in the absence of DNA. Can form a heterodimer with JUN. Heterodimerization is essential for its transcriptional activity. Interacts with SMAD3 and SMAD4. Binds through its N-terminal region to UTF1 which acts as a coactivator of ATF2 transcriptional activity. Interacts with the HK1/VDAC1 complex. Interacts with NBN, MRE11, XPO1, KAT5 and CUL3. In terms of processing, phosphorylation of Thr-51 by MAPK14 and MAPK11, and at Thr-53 by MAPK1/ERK2, MAPK3/ERK1, MAPK11, MAPK12 and MAPK14 in response to external stimulus like insulin causes increased transcriptional activity. Phosphorylated by PLK3 following hyperosmotic stress. Also phosphorylated and activated by JNK and CaMK4. ATM-mediated phosphorylation at Ser-472 and Ser-480 stimulates its function in DNA damage response. Phosphorylation at Ser-44, Thr-55 and Ser-103 activates its transcriptional activity. Phosphorylation at Thr-51 or Thr-53 enhances acetylation of histones H2B and H4.

Its subcellular location is the nucleus. It is found in the cytoplasm. It localises to the mitochondrion outer membrane. In terms of biological role, transcriptional activator which regulates the transcription of various genes, including those involved in anti-apoptosis, cell growth, and DNA damage response. Dependent on its binding partner, binds to CRE (cAMP response element) consensus sequences (5'-TGACGTCA-3') or to AP-1 (activator protein 1) consensus sequences (5'-TGACTCA-3'). In the nucleus, contributes to global transcription and the DNA damage response, in addition to specific transcriptional activities that are related to cell development, proliferation and death. In the cytoplasm, interacts with and perturbs HK1- and VDAC1-containing complexes at the mitochondrial outer membrane, thereby impairing mitochondrial membrane potential, inducing mitochondrial leakage and promoting cell death. The phosphorylated form (mediated by ATM) plays a role in the DNA damage response and is involved in the ionizing radiation (IR)-induced S phase checkpoint control and in the recruitment of the MRN complex into the IR-induced foci (IRIF). Exhibits histone acetyltransferase (HAT) activity which specifically acetylates histones H2B and H4 in vitro. In concert with CUL3 and RBX1, promotes the degradation of KAT5 thereby attenuating its ability to acetylate and activate ATM. Can elicit oncogenic or tumor suppressor activities depending on the tissue or cell type. This is Cyclic AMP-dependent transcription factor ATF-2 (Atf2) from Rattus norvegicus (Rat).